The sequence spans 474 residues: Aspartyl/glutamyl-tRNA(Asn/Gln) amidotransferase subunit B (474 aa).

This sequence belongs to the GatB/GatE family. GatB subfamily. As to quaternary structure, heterotrimer of A, B and C subunits.

It carries out the reaction L-glutamyl-tRNA(Gln) + L-glutamine + ATP + H2O = L-glutaminyl-tRNA(Gln) + L-glutamate + ADP + phosphate + H(+). The enzyme catalyses L-aspartyl-tRNA(Asn) + L-glutamine + ATP + H2O = L-asparaginyl-tRNA(Asn) + L-glutamate + ADP + phosphate + 2 H(+). Functionally, allows the formation of correctly charged Asn-tRNA(Asn) or Gln-tRNA(Gln) through the transamidation of misacylated Asp-tRNA(Asn) or Glu-tRNA(Gln) in organisms which lack either or both of asparaginyl-tRNA or glutaminyl-tRNA synthetases. The reaction takes place in the presence of glutamine and ATP through an activated phospho-Asp-tRNA(Asn) or phospho-Glu-tRNA(Gln). In Campylobacter curvus (strain 525.92), this protein is Aspartyl/glutamyl-tRNA(Asn/Gln) amidotransferase subunit B.